Reading from the N-terminus, the 275-residue chain is Transmembrane protein 202 (275 aa).

A run of 4 helical transmembrane segments spans residues 60–80, 116–136, 151–171, and 193–213; these read SGFS…QFLV, ALFL…LSSC, VSML…LFLA, and WCSE…FITF.

It is found in the membrane. This chain is Transmembrane protein 202 (Tmem202), found in Mus musculus (Mouse).